Here is a 263-residue protein sequence, read N- to C-terminus: MSLYDDKYLAIANDILENGYFDNNRTGVKTYKLPHQIMQFNLEKEFPILTTKFVAFKTAVKELLWIFKDQSNSVKELQSQNVKIWDEWMMEDGTIGTSYGWIVKKFDQIDKLIDALKNNPQDRRMMINLWQIPYLDSAPLYPCCFLTMWDVTDGKLNCMLVQRSGDWGLGVPFNTSQYAVLVHLLAQVTGLKPGLFTHVINNAHIYENQVDGLKLQLTRKNDAYNAPKLWINPEITNFYDFTPDDIKLEDYKHHESIKMDVSV.

DUMP contacts are provided by residues Arg25 and Arg123–Arg124. Cys143 (nucleophile) is an active-site residue. Residues Arg163–Asp166, Asn174, and His204–Tyr206 contribute to the dUMP site. Asp166 is a (6R)-5,10-methylene-5,6,7,8-tetrahydrofolate binding site. (6R)-5,10-methylene-5,6,7,8-tetrahydrofolate is bound at residue Ser262.

Belongs to the thymidylate synthase family. Bacterial-type ThyA subfamily. As to quaternary structure, homodimer.

It localises to the cytoplasm. The enzyme catalyses dUMP + (6R)-5,10-methylene-5,6,7,8-tetrahydrofolate = 7,8-dihydrofolate + dTMP. It participates in pyrimidine metabolism; dTTP biosynthesis. Catalyzes the reductive methylation of 2'-deoxyuridine-5'-monophosphate (dUMP) to 2'-deoxythymidine-5'-monophosphate (dTMP) while utilizing 5,10-methylenetetrahydrofolate (mTHF) as the methyl donor and reductant in the reaction, yielding dihydrofolate (DHF) as a by-product. This enzymatic reaction provides an intracellular de novo source of dTMP, an essential precursor for DNA biosynthesis. The chain is Thymidylate synthase from Clostridium beijerinckii (strain ATCC 51743 / NCIMB 8052) (Clostridium acetobutylicum).